Here is a 372-residue protein sequence, read N- to C-terminus: Tyrosine--tRNA ligase (372 aa).

The L-tyrosine site is built by Tyr-37, Tyr-169, Gln-173, Asp-176, and Gln-191. Residues 246 to 250 (KMSKS) carry the 'KMSKS' region motif. Lys-249 is a binding site for ATP.

Belongs to the class-I aminoacyl-tRNA synthetase family. TyrS type 4 subfamily. Homodimer.

It is found in the cytoplasm. The catalysed reaction is tRNA(Tyr) + L-tyrosine + ATP = L-tyrosyl-tRNA(Tyr) + AMP + diphosphate + H(+). Catalyzes the attachment of tyrosine to tRNA(Tyr) in a two-step reaction: tyrosine is first activated by ATP to form Tyr-AMP and then transferred to the acceptor end of tRNA(Tyr). The chain is Tyrosine--tRNA ligase from Pyrobaculum calidifontis (strain DSM 21063 / JCM 11548 / VA1).